The following is a 247-amino-acid chain: PF03932 family protein CutC (247 aa).

This sequence belongs to the CutC family.

Its subcellular location is the cytoplasm. This Chromobacterium violaceum (strain ATCC 12472 / DSM 30191 / JCM 1249 / CCUG 213 / NBRC 12614 / NCIMB 9131 / NCTC 9757 / MK) protein is PF03932 family protein CutC.